The chain runs to 204 residues: Octanoyltransferase (204 aa).

Residues 27 to 204 (KNTKDELWIV…LINYVSRNRH (178 aa)) enclose the BPL/LPL catalytic domain. Substrate-binding positions include 66–73 (RGGQVTYH), 133–135 (ALG), and 146–148 (GLS). Cys-164 acts as the Acyl-thioester intermediate in catalysis.

This sequence belongs to the LipB family.

The protein localises to the cytoplasm. The enzyme catalyses octanoyl-[ACP] + L-lysyl-[protein] = N(6)-octanoyl-L-lysyl-[protein] + holo-[ACP] + H(+). It functions in the pathway protein modification; protein lipoylation via endogenous pathway; protein N(6)-(lipoyl)lysine from octanoyl-[acyl-carrier-protein]: step 1/2. Its function is as follows. Catalyzes the transfer of endogenously produced octanoic acid from octanoyl-acyl-carrier-protein onto the lipoyl domains of lipoate-dependent enzymes. Lipoyl-ACP can also act as a substrate although octanoyl-ACP is likely to be the physiological substrate. This is Octanoyltransferase from Vesicomyosocius okutanii subsp. Calyptogena okutanii (strain HA).